The following is a 144-amino-acid chain: MTEVNINVTEIMEALPHRYPFLLVDRVIDIAEDEITAIKNVTINEEFFQGHFPQYPVMPGVLIMEALAQAAGVLELSKPENKGKLVFYAGMDNVKYKKQVTPGDKLVLHAKFIKRRGPIAVVEAEATVDGKLAAKGTLTFALGR.

The active site involves H51.

This sequence belongs to the thioester dehydratase family. FabZ subfamily.

The protein localises to the cytoplasm. It catalyses the reaction a (3R)-hydroxyacyl-[ACP] = a (2E)-enoyl-[ACP] + H2O. Involved in unsaturated fatty acids biosynthesis. Catalyzes the dehydration of short chain beta-hydroxyacyl-ACPs and long chain saturated and unsaturated beta-hydroxyacyl-ACPs. The polypeptide is 3-hydroxyacyl-[acyl-carrier-protein] dehydratase FabZ (Lactococcus lactis subsp. cremoris (strain MG1363)).